A 369-amino-acid polypeptide reads, in one-letter code: 3-dehydroquinate synthase (369 aa).

NAD(+)-binding positions include 78–83 (DGERYK), 112–116 (GVIGD), 136–137 (TT), Lys149, Lys158, and 176–179 (TLTT). Zn(2+) is bound by residues Glu191, His254, and His271.

Belongs to the sugar phosphate cyclases superfamily. Dehydroquinate synthase family. NAD(+) serves as cofactor. It depends on Co(2+) as a cofactor. Zn(2+) is required as a cofactor.

It localises to the cytoplasm. The catalysed reaction is 7-phospho-2-dehydro-3-deoxy-D-arabino-heptonate = 3-dehydroquinate + phosphate. It functions in the pathway metabolic intermediate biosynthesis; chorismate biosynthesis; chorismate from D-erythrose 4-phosphate and phosphoenolpyruvate: step 2/7. Functionally, catalyzes the conversion of 3-deoxy-D-arabino-heptulosonate 7-phosphate (DAHP) to dehydroquinate (DHQ). This is 3-dehydroquinate synthase from Nitrosomonas europaea (strain ATCC 19718 / CIP 103999 / KCTC 2705 / NBRC 14298).